The sequence spans 92 residues: Signal peptidase complex subunit 1 (92 aa).

At 1-12 (MDWQGQKLVEQL) the chain is on the cytoplasmic side. A helical membrane pass occupies residues 13–30 (MQILLVISGVVAVVVGYT). Topologically, residues 31 to 36 (TESFRT) are lumenal. A helical transmembrane segment spans residues 37-59 (MMLIYAGGVVLTTLVTVPNWPFY). Over 60-92 (NLHPLKWLDPSEAEKHPKPEVVSVASKKKFSKK) the chain is Cytoplasmic. Positions 73 to 92 (EKHPKPEVVSVASKKKFSKK) are disordered.

It belongs to the SPCS1 family. Component of the signal peptidase complex (SPC) composed of a catalytic subunit SEC11 and three accessory subunits SPCS1, SPCS2 and SPCS3. The complex induces a local thinning of the ER membrane which is used to measure the length of the signal peptide (SP) h-region of protein substrates. This ensures the selectivity of the complex towards h-regions shorter than 18-20 amino acids.

It is found in the endoplasmic reticulum membrane. Functionally, component of the signal peptidase complex (SPC) which catalyzes the cleavage of N-terminal signal sequences from nascent proteins as they are translocated into the lumen of the endoplasmic reticulum. Dispensable for SPC enzymatic activity. This chain is Signal peptidase complex subunit 1, found in Arabidopsis thaliana (Mouse-ear cress).